Consider the following 216-residue polypeptide: 3-isopropylmalate dehydratase small subunit (216 aa).

The protein belongs to the LeuD family. LeuD type 1 subfamily. As to quaternary structure, heterodimer of LeuC and LeuD.

It carries out the reaction (2R,3S)-3-isopropylmalate = (2S)-2-isopropylmalate. Its pathway is amino-acid biosynthesis; L-leucine biosynthesis; L-leucine from 3-methyl-2-oxobutanoate: step 2/4. In terms of biological role, catalyzes the isomerization between 2-isopropylmalate and 3-isopropylmalate, via the formation of 2-isopropylmaleate. The chain is 3-isopropylmalate dehydratase small subunit from Psychrobacter sp. (strain PRwf-1).